Reading from the N-terminus, the 527-residue chain is Ribonuclease Y 2 (527 aa).

Residues 2 to 22 traverse the membrane as a helical segment; it reads IAMIATAIIGIVAGGGLGWAL. In terms of domain architecture, HD spans 339–432; that stretch reads QYFHCGEVGW…VIAADAVSGA (94 aa).

Belongs to the RNase Y family.

It is found in the cell membrane. Its function is as follows. Endoribonuclease that initiates mRNA decay. This is Ribonuclease Y 2 from Bdellovibrio bacteriovorus (strain ATCC 15356 / DSM 50701 / NCIMB 9529 / HD100).